Consider the following 417-residue polypeptide: MLEQMGKQAKDAAFILAQLTTAEKNCALSIIAEQLEQQAPLILAENAKDIELAKQNGLSDALIDRLLLTQERLQGIANDVRHVISLADPVGKIIDGGTLDSGLKIERVRTPLGVIGTIYEARPNVTIDVASLCLKTGNAVILRGGKETQFSNKILIEVVQNALEQAGLPKFAVQAITDPNRELVMQLLKLDRYVDMIIPRGGAGLHELCKQHSTIPVIVGGVGVCHIFVEKSADQNKAVFVIDNAKTQRPSTCNTLETLLVQHSIAEEFLPKLVSHLSAKNVKYHAKSTALNILKQAGANVCEVTEKELRKEWGSLDLNVVVVEDIHAAIEHIRQYGTQHSESILTSSQNLARQFINQVDAAAVYVNASTRFTDGGQFGLGAEVAVSTQKLHARGPMGLEALTSYKWVCEGEYTVRK.

Belongs to the gamma-glutamyl phosphate reductase family.

It is found in the cytoplasm. The catalysed reaction is L-glutamate 5-semialdehyde + phosphate + NADP(+) = L-glutamyl 5-phosphate + NADPH + H(+). Its pathway is amino-acid biosynthesis; L-proline biosynthesis; L-glutamate 5-semialdehyde from L-glutamate: step 2/2. Its function is as follows. Catalyzes the NADPH-dependent reduction of L-glutamate 5-phosphate into L-glutamate 5-semialdehyde and phosphate. The product spontaneously undergoes cyclization to form 1-pyrroline-5-carboxylate. The protein is Gamma-glutamyl phosphate reductase of Haemophilus influenzae (strain PittGG).